Here is a 166-residue protein sequence, read N- to C-terminus: Large ribosomal subunit protein uL10 (166 aa).

This sequence belongs to the universal ribosomal protein uL10 family. Part of the ribosomal stalk of the 50S ribosomal subunit. The N-terminus interacts with L11 and the large rRNA to form the base of the stalk. The C-terminus forms an elongated spine to which L12 dimers bind in a sequential fashion forming a multimeric L10(L12)X complex.

In terms of biological role, forms part of the ribosomal stalk, playing a central role in the interaction of the ribosome with GTP-bound translation factors. The polypeptide is Large ribosomal subunit protein uL10 (Shewanella sediminis (strain HAW-EB3)).